An 85-amino-acid polypeptide reads, in one-letter code: Conotoxin Im28.1 (85 aa).

The signal sequence occupies residues 1–21; that stretch reads MPKLEMMLLVLLILPLCYIDA. A propeptide spanning residues 22–40 is cleaved from the precursor; the sequence is VGPPPPWNMEDEIIEHWQK.

It belongs to the conotoxin D superfamily. In terms of processing, contains 5 disulfide bonds. As to expression, expressed by the venom duct.

The protein localises to the secreted. Its function is as follows. Probable neurotoxin. This is Conotoxin Im28.1 from Conus imperialis (Imperial cone).